Here is a 486-residue protein sequence, read N- to C-terminus: NVGYITQIIGPVLDVAFSPGEMPNIYNSLVVKGQNPAGQDINVTCEVQQLLGNNEVRAVATSATDGLMRGMGAVDTGAPLSVPVGETTLGRISNVLGEPVDNPGPVQSNTTFPIHRSAPAFTQLDTKLSTFETGIKVVDLLAPYRRGGKIGLFGGAGVGKTVPITELINNIAKAHGGVSVSGGVGERTREGNDLYMEMKESKVINEQNISESKVALVYGQMNEPPGARMRVGSTASTMAEYFRDVNKQDVPLFIDNILRFVQAGSEVSALLGRMPSAVGYQPTLGTEMGSLQERITSTKEGSITSIQAVYVPADDLTDPAPATTSAHLDATTVLSRGLAAKGIYPAVDPLDSTSTMSQPWIVGEEHYETAQGVKQTSQRYKELQDIIAILGLDELSEEDRLTVARARKIERFSSQPFLVAEVFTGSPGKYVSLPETIKGFQMILPGELDNLPEQASYLAGNVDEATAKAAALQVEGQRKGWYRIFA.

G154–T161 contributes to the ATP binding site.

The protein belongs to the ATPase alpha/beta chains family. As to quaternary structure, F-type ATPases have 2 components, CF(1) - the catalytic core - and CF(0) - the membrane proton channel. CF(1) has five subunits: alpha(3), beta(3), gamma(1), delta(1), epsilon(1). CF(0) has four main subunits: a(1), b(1), b'(1) and c(9-12).

Its subcellular location is the plastid. It localises to the chloroplast thylakoid membrane. It catalyses the reaction ATP + H2O + 4 H(+)(in) = ADP + phosphate + 5 H(+)(out). Produces ATP from ADP in the presence of a proton gradient across the membrane. The catalytic sites are hosted primarily by the beta subunits. The chain is ATP synthase subunit beta, chloroplastic from Dennstaedtia punctilobula (Hay-scented fern).